The following is a 433-amino-acid chain: Enolase (433 aa).

Gln-167 contacts (2R)-2-phosphoglycerate. Glu-209 serves as the catalytic Proton donor. The Mg(2+) site is built by Asp-246, Glu-291, and Asp-318. The (2R)-2-phosphoglycerate site is built by Lys-343, Arg-372, Ser-373, and Lys-394. The Proton acceptor role is filled by Lys-343.

The protein belongs to the enolase family. In terms of assembly, component of the RNA degradosome, a multiprotein complex involved in RNA processing and mRNA degradation. It depends on Mg(2+) as a cofactor.

The protein resides in the cytoplasm. It is found in the secreted. Its subcellular location is the cell surface. It catalyses the reaction (2R)-2-phosphoglycerate = phosphoenolpyruvate + H2O. Its pathway is carbohydrate degradation; glycolysis; pyruvate from D-glyceraldehyde 3-phosphate: step 4/5. Catalyzes the reversible conversion of 2-phosphoglycerate (2-PG) into phosphoenolpyruvate (PEP). It is essential for the degradation of carbohydrates via glycolysis. The polypeptide is Enolase (Histophilus somni (strain 129Pt) (Haemophilus somnus)).